We begin with the raw amino-acid sequence, 168 residues long: Transcription antitermination protein NusB (168 aa).

It belongs to the NusB family.

In terms of biological role, involved in transcription antitermination. Required for transcription of ribosomal RNA (rRNA) genes. Binds specifically to the boxA antiterminator sequence of the ribosomal RNA (rrn) operons. This is Transcription antitermination protein NusB from Deinococcus deserti (strain DSM 17065 / CIP 109153 / LMG 22923 / VCD115).